The sequence spans 249 residues: 5'-nucleotidase SurE (249 aa).

D9, D10, S40, and N92 together coordinate a divalent metal cation.

Belongs to the SurE nucleotidase family. It depends on a divalent metal cation as a cofactor.

The protein resides in the cytoplasm. It carries out the reaction a ribonucleoside 5'-phosphate + H2O = a ribonucleoside + phosphate. Nucleotidase that shows phosphatase activity on nucleoside 5'-monophosphates. This Shewanella sediminis (strain HAW-EB3) protein is 5'-nucleotidase SurE.